The primary structure comprises 24 residues: Neurotoxin-2 (24 aa).

The region spanning 1–24 (EDGYLLNRDTGCKVSCGTCRYCND) is the LCN-type CS-alpha/beta domain.

Belongs to the long (4 C-C) scorpion toxin superfamily. Sodium channel inhibitor family. Alpha subfamily. Expressed by the venom gland.

The protein resides in the secreted. In terms of biological role, binds to sodium channels (Nav) and inhibits the inactivation of the activated channels, thereby blocking neuronal transmission. This toxin is active against mammals. This is Neurotoxin-2 from Hottentotta tamulus (Eastern Indian scorpion).